Reading from the N-terminus, the 1207-residue chain is DNA-directed RNA polymerase subunit beta' (1207 aa).

Positions 60, 62, 75, and 78 each coordinate Zn(2+). Mg(2+) is bound by residues D449, D451, and D453. C822, C896, C903, and C906 together coordinate Zn(2+).

Belongs to the RNA polymerase beta' chain family. The RNAP catalytic core consists of 2 alpha, 1 beta, 1 beta' and 1 omega subunit. When a sigma factor is associated with the core the holoenzyme is formed, which can initiate transcription. It depends on Mg(2+) as a cofactor. Requires Zn(2+) as cofactor.

The catalysed reaction is RNA(n) + a ribonucleoside 5'-triphosphate = RNA(n+1) + diphosphate. In terms of biological role, DNA-dependent RNA polymerase catalyzes the transcription of DNA into RNA using the four ribonucleoside triphosphates as substrates. The chain is DNA-directed RNA polymerase subunit beta' from Staphylococcus epidermidis (strain ATCC 35984 / DSM 28319 / BCRC 17069 / CCUG 31568 / BM 3577 / RP62A).